Reading from the N-terminus, the 160-residue chain is Cyclic pyranopterin monophosphate synthase (160 aa).

Substrate-binding positions include 77-79 and 114-115; these read MCH and ME. Asp-129 is a catalytic residue.

It belongs to the MoaC family. As to quaternary structure, homohexamer; trimer of dimers.

It carries out the reaction (8S)-3',8-cyclo-7,8-dihydroguanosine 5'-triphosphate = cyclic pyranopterin phosphate + diphosphate. The protein operates within cofactor biosynthesis; molybdopterin biosynthesis. Its function is as follows. Catalyzes the conversion of (8S)-3',8-cyclo-7,8-dihydroguanosine 5'-triphosphate to cyclic pyranopterin monophosphate (cPMP). The protein is Cyclic pyranopterin monophosphate synthase of Listeria welshimeri serovar 6b (strain ATCC 35897 / DSM 20650 / CCUG 15529 / CIP 8149 / NCTC 11857 / SLCC 5334 / V8).